The primary structure comprises 98 residues: DNA-binding protein Fis (98 aa).

Positions 74-93 (QTRAATMLGINRGTLRKKLK) form a DNA-binding region, H-T-H motif.

This sequence belongs to the transcriptional regulatory Fis family. In terms of assembly, homodimer.

Its function is as follows. Activates ribosomal RNA transcription. Plays a direct role in upstream activation of rRNA promoters. In Glaesserella parasuis serovar 5 (strain SH0165) (Haemophilus parasuis), this protein is DNA-binding protein Fis.